A 382-amino-acid chain; its full sequence is Chaperone protein DnaJ (382 aa).

One can recognise a J domain in the interval 5-70 (DFYEILGVPK…QKRAAYDQYG (66 aa)). The CR-type zinc finger occupies 137–215 (GVTKEIRIPT…CHGHGRVEKT (79 aa)). The Zn(2+) site is built by Cys-150, Cys-153, Cys-167, Cys-170, Cys-189, Cys-192, Cys-203, and Cys-206. 4 CXXCXGXG motif repeats span residues 150-157 (CDICHGSG), 167-174 (CPTCHGSG), 189-196 (CPHCHGRG), and 203-210 (CNKCHGHG).

Belongs to the DnaJ family. Homodimer. Zn(2+) serves as cofactor.

It is found in the cytoplasm. Functionally, participates actively in the response to hyperosmotic and heat shock by preventing the aggregation of stress-denatured proteins and by disaggregating proteins, also in an autonomous, DnaK-independent fashion. Unfolded proteins bind initially to DnaJ; upon interaction with the DnaJ-bound protein, DnaK hydrolyzes its bound ATP, resulting in the formation of a stable complex. GrpE releases ADP from DnaK; ATP binding to DnaK triggers the release of the substrate protein, thus completing the reaction cycle. Several rounds of ATP-dependent interactions between DnaJ, DnaK and GrpE are required for fully efficient folding. Also involved, together with DnaK and GrpE, in the DNA replication of plasmids through activation of initiation proteins. The chain is Chaperone protein DnaJ from Enterobacter sp. (strain 638).